We begin with the raw amino-acid sequence, 217 residues long: N-(5'-phosphoribosyl)anthranilate isomerase (217 aa).

The protein belongs to the TrpF family.

It carries out the reaction N-(5-phospho-beta-D-ribosyl)anthranilate = 1-(2-carboxyphenylamino)-1-deoxy-D-ribulose 5-phosphate. It functions in the pathway amino-acid biosynthesis; L-tryptophan biosynthesis; L-tryptophan from chorismate: step 3/5. This Chlorobium phaeovibrioides (strain DSM 265 / 1930) (Prosthecochloris vibrioformis (strain DSM 265)) protein is N-(5'-phosphoribosyl)anthranilate isomerase.